We begin with the raw amino-acid sequence, 257 residues long: Protein orai-2 (257 aa).

4 helical membrane-spanning segments follow: residues 67–84 (TSAL…EVQL), 95–115 (LIAF…ALLI), 149–169 (LAWG…VVLL), and 199–219 (AALV…VFTI).

The protein belongs to the Orai family.

It is found in the membrane. Ca(2+) release-activated Ca(2+)-like (CRAC-like) channel subunit which mediates Ca(2+) influx and increase in Ca(2+)-selective current by synergy with the Ca(2+) sensor, STIM1. This chain is Protein orai-2 (ORAI2), found in Gallus gallus (Chicken).